A 151-amino-acid polypeptide reads, in one-letter code: Large ribosomal subunit protein bL9 (151 aa).

It belongs to the bacterial ribosomal protein bL9 family.

Binds to the 23S rRNA. The protein is Large ribosomal subunit protein bL9 of Rhodococcus opacus (strain B4).